We begin with the raw amino-acid sequence, 404 residues long: Imidazolonepropionase (404 aa).

Residues His70 and His72 each contribute to the Fe(3+) site. 2 residues coordinate Zn(2+): His70 and His72. 3 residues coordinate 4-imidazolone-5-propanoate: Arg79, Tyr142, and His174. Tyr142 lines the N-formimidoyl-L-glutamate pocket. Fe(3+) is bound at residue His234. His234 serves as a coordination point for Zn(2+). Glu237 contributes to the 4-imidazolone-5-propanoate binding site. Residue Asp308 participates in Fe(3+) binding. Zn(2+) is bound at residue Asp308.

It belongs to the metallo-dependent hydrolases superfamily. HutI family. Zn(2+) is required as a cofactor. Fe(3+) serves as cofactor.

It is found in the cytoplasm. It catalyses the reaction 4-imidazolone-5-propanoate + H2O = N-formimidoyl-L-glutamate. It participates in amino-acid degradation; L-histidine degradation into L-glutamate; N-formimidoyl-L-glutamate from L-histidine: step 3/3. Catalyzes the hydrolytic cleavage of the carbon-nitrogen bond in imidazolone-5-propanoate to yield N-formimidoyl-L-glutamate. It is the third step in the universal histidine degradation pathway. This Thermoplasma volcanium (strain ATCC 51530 / DSM 4299 / JCM 9571 / NBRC 15438 / GSS1) protein is Imidazolonepropionase.